The following is an 84-amino-acid chain: MYB-like transcription factor TCL1 (84 aa).

A Myb-like domain is found at 36-73 (TEQEEDLIFRMYRLVGDRWDLIARRVVGREAKEIERYW).

As to expression, expressed in inflorescences and trichomes of rosette and cauline leaves.

The protein resides in the nucleus. Functionally, MYB-type transcription factor involved in trichome cell specification. Acts as a negative regulator of trichome patterning and formation by direct binding to the cis-acting regulatory elements of GL1, thus suppressing the expression of GL1. The sequence is that of MYB-like transcription factor TCL1 (TCL1) from Arabidopsis thaliana (Mouse-ear cress).